The primary structure comprises 297 residues: Formamidopyrimidine-DNA glycosylase (297 aa).

Residue Pro-2 is the Schiff-base intermediate with DNA of the active site. The active-site Proton donor is the Glu-3. Lys-58 (proton donor; for beta-elimination activity) is an active-site residue. DNA is bound by residues His-106, Arg-133, and Arg-178. An FPG-type zinc finger spans residues Phe-263 to His-297. Arg-287 serves as the catalytic Proton donor; for delta-elimination activity.

Belongs to the FPG family. As to quaternary structure, monomer. The cofactor is Zn(2+).

The enzyme catalyses Hydrolysis of DNA containing ring-opened 7-methylguanine residues, releasing 2,6-diamino-4-hydroxy-5-(N-methyl)formamidopyrimidine.. It catalyses the reaction 2'-deoxyribonucleotide-(2'-deoxyribose 5'-phosphate)-2'-deoxyribonucleotide-DNA = a 3'-end 2'-deoxyribonucleotide-(2,3-dehydro-2,3-deoxyribose 5'-phosphate)-DNA + a 5'-end 5'-phospho-2'-deoxyribonucleoside-DNA + H(+). Functionally, involved in base excision repair of DNA damaged by oxidation or by mutagenic agents. Acts as a DNA glycosylase that recognizes and removes damaged bases. Has a preference for oxidized purines, such as 7,8-dihydro-8-oxoguanine (8-oxoG). Has AP (apurinic/apyrimidinic) lyase activity and introduces nicks in the DNA strand. Cleaves the DNA backbone by beta-delta elimination to generate a single-strand break at the site of the removed base with both 3'- and 5'-phosphates. This chain is Formamidopyrimidine-DNA glycosylase, found in Cupriavidus metallidurans (strain ATCC 43123 / DSM 2839 / NBRC 102507 / CH34) (Ralstonia metallidurans).